Reading from the N-terminus, the 102-residue chain is NADH-quinone oxidoreductase subunit K (102 aa).

3 helical membrane passes run 6–26, 30–50, and 62–82; these read LEHG…GLMV, ILFV…AFVV, and VMFI…LAIL.

This sequence belongs to the complex I subunit 4L family. NDH-1 is composed of 13 different subunits. Subunits NuoA, H, J, K, L, M, N constitute the membrane sector of the complex.

It localises to the cell inner membrane. The catalysed reaction is a quinone + NADH + 5 H(+)(in) = a quinol + NAD(+) + 4 H(+)(out). Its function is as follows. NDH-1 shuttles electrons from NADH, via FMN and iron-sulfur (Fe-S) centers, to quinones in the respiratory chain. The immediate electron acceptor for the enzyme in this species is believed to be ubiquinone. Couples the redox reaction to proton translocation (for every two electrons transferred, four hydrogen ions are translocated across the cytoplasmic membrane), and thus conserves the redox energy in a proton gradient. The protein is NADH-quinone oxidoreductase subunit K of Pseudomonas syringae pv. syringae (strain B728a).